We begin with the raw amino-acid sequence, 313 residues long: Serine/threonine-protein phosphatase PP2A-4 catalytic subunit (313 aa).

Residues aspartate 61, histidine 63, aspartate 89, and asparagine 121 each coordinate Mn(2+). Catalysis depends on histidine 122, which acts as the Proton donor. Histidine 171 and histidine 245 together coordinate Mn(2+). Leucine 313 carries the post-translational modification Leucine methyl ester.

Belongs to the PPP phosphatase family. PP-2A subfamily. PP2A consists of a common heterodimeric core enzyme, composed of a 36 kDa catalytic subunit (subunit C) and a 65 kDa constant regulatory subunit (subunit A), that associates with a variety of regulatory subunits such as subunits B (the R2/B/PR55/B55, R3/B''/PR72/PR130/PR59 and R5/B'/B56 families). Interacts with SIC/RON3. The cofactor is Mn(2+). Reversibly methyl esterified on Leu-313 by leucine carboxyl methyltransferase 1 (LCMT1) and pectin methylesterase 1 (PME1). Carboxyl methylation influences the affinity of the catalytic subunit for the different regulatory subunits, thereby modulating the PP2A holoenzyme's substrate specificity, enzyme activity and cellular localization. In terms of processing, phosphorylation of either threonine (by autophosphorylation-activated protein kinase) or tyrosine results in inactivation of the phosphatase. Auto-dephosphorylation has been suggested as a mechanism for reactivation.

The protein localises to the cytoplasm. It carries out the reaction O-phospho-L-seryl-[protein] + H2O = L-seryl-[protein] + phosphate. The enzyme catalyses O-phospho-L-threonyl-[protein] + H2O = L-threonyl-[protein] + phosphate. Functions redundantly with PP2A3, and is involved in establishing auxin gradients, apical-basal axis of polarity and root and shoot apical meristem during embryogenesis. May dephosphorylate PIN1 and regulate its subcellular distribution for polar auxin transport. The holoenzyme composed of PP2AA1, PP2A4 and B'ZETA or B'ETA acts as a negative regulator of plant innate immunity by controlling BAK1 phosphorylation state and activation in surface-localized immune receptor complexes. The polypeptide is Serine/threonine-protein phosphatase PP2A-4 catalytic subunit (Arabidopsis thaliana (Mouse-ear cress)).